The sequence spans 143 residues: Small ribosomal subunit protein uS11c (143 aa).

It belongs to the universal ribosomal protein uS11 family. In terms of assembly, part of the 30S ribosomal subunit.

The protein localises to the plastid. It localises to the chloroplast. This chain is Small ribosomal subunit protein uS11c, found in Brachypodium distachyon (Purple false brome).